Reading from the N-terminus, the 309-residue chain is ATP synthase gamma chain (309 aa).

This sequence belongs to the ATPase gamma chain family. As to quaternary structure, F-type ATPases have 2 components, CF(1) - the catalytic core - and CF(0) - the membrane proton channel. CF(1) has five subunits: alpha(3), beta(3), gamma(1), delta(1), epsilon(1). CF(0) has three main subunits: a, b and c.

Its subcellular location is the cell membrane. Produces ATP from ADP in the presence of a proton gradient across the membrane. The gamma chain is believed to be important in regulating ATPase activity and the flow of protons through the CF(0) complex. This is ATP synthase gamma chain from Mycolicibacterium vanbaalenii (strain DSM 7251 / JCM 13017 / BCRC 16820 / KCTC 9966 / NRRL B-24157 / PYR-1) (Mycobacterium vanbaalenii).